The following is a 310-amino-acid chain: MRHLLSTEGLDAATATAVLDTAGTLKQTLLGREVRKLPTLRGRTVVTMFYENSTRTRVSFEVAGKWMSADVINVSAGASSVGKGESLRDTALTLSAAGADCVIVRHPASGAAHRLAGWLEATGTQVVNAGDGMHEHPTQALLDAATLRERLGELAGRRVAIVGDLLHSRVARSNVHLLRTLGAQVVLVAPPTLVPAGVEHWGAEVRHELDPELPGLDAVMLLRVQAERMHGGFFPSAREYSIAYGMNEARLARLPEHAVVLHPGPMLRGMEIAPAVADSPRAAITEQVRNGVHVRMAVLYHLLAGEEIAA.

Carbamoyl phosphate contacts are provided by arginine 55 and threonine 56. Lysine 83 is an L-aspartate binding site. Carbamoyl phosphate-binding residues include arginine 105, histidine 136, and glutamine 139. 2 residues coordinate L-aspartate: arginine 169 and arginine 223. Residues glycine 264 and proline 265 each coordinate carbamoyl phosphate.

The protein belongs to the aspartate/ornithine carbamoyltransferase superfamily. ATCase family. In terms of assembly, heterododecamer (2C3:3R2) of six catalytic PyrB chains organized as two trimers (C3), and six regulatory PyrI chains organized as three dimers (R2).

It catalyses the reaction carbamoyl phosphate + L-aspartate = N-carbamoyl-L-aspartate + phosphate + H(+). Its pathway is pyrimidine metabolism; UMP biosynthesis via de novo pathway; (S)-dihydroorotate from bicarbonate: step 2/3. Catalyzes the condensation of carbamoyl phosphate and aspartate to form carbamoyl aspartate and inorganic phosphate, the committed step in the de novo pyrimidine nucleotide biosynthesis pathway. The sequence is that of Aspartate carbamoyltransferase catalytic subunit from Saccharopolyspora erythraea (strain ATCC 11635 / DSM 40517 / JCM 4748 / NBRC 13426 / NCIMB 8594 / NRRL 2338).